The sequence spans 777 residues: Isoamylase (777 aa).

The first 32 residues, 1–32 (MDPHAPQRQRSGQRLRALALAALACALSPAHA), serve as a signal peptide directing secretion. Asp162, Glu263, Thr264, Asn266, and Asp293 together coordinate Ca(2+). Catalysis depends on Asp410, which acts as the Nucleophile. Cys419 and Cys423 form a disulfide bridge. Glu458 acts as the Proton donor in catalysis.

Belongs to the glycosyl hydrolase 13 family. Monomer. Ca(2+) serves as cofactor.

It carries out the reaction Hydrolysis of (1-&gt;6)-alpha-D-glucosidic branch linkages in glycogen, amylopectin and their beta-limit dextrins.. Its function is as follows. Has a high rate of hydrolysis for glycogen. Does not cleave pullulan. In Flavobacterium sp, this protein is Isoamylase (iam).